A 256-amino-acid chain; its full sequence is Small ribosomal subunit protein uS2 (256 aa).

Belongs to the universal ribosomal protein uS2 family.

The sequence is that of Small ribosomal subunit protein uS2 from Ruegeria sp. (strain TM1040) (Silicibacter sp.).